The sequence spans 252 residues: Probable transcriptional regulatory protein Fnod_1106 (252 aa).

Belongs to the TACO1 family.

Its subcellular location is the cytoplasm. This chain is Probable transcriptional regulatory protein Fnod_1106, found in Fervidobacterium nodosum (strain ATCC 35602 / DSM 5306 / Rt17-B1).